The sequence spans 194 residues: Putative 3-methyladenine DNA glycosylase (194 aa).

This sequence belongs to the DNA glycosylase MPG family.

This Anaeromyxobacter sp. (strain Fw109-5) protein is Putative 3-methyladenine DNA glycosylase.